The following is a 456-amino-acid chain: NADH-quinone oxidoreductase subunit N (456 aa).

Helical transmembrane passes span 6–26 (LFAL…MLLA), 45–65 (VAAL…GALF), 75–95 (TAYA…AGVA), 97–117 (EAPA…GAGH), 118–138 (AATL…LFAF), 151–171 (FLVM…LIYA), 181–201 (WVGH…GLAF), 220–240 (PAGA…IAIL), 252–272 (LWSA…NVLA), 281–301 (MLGY…ASGA), 308–328 (VLFY…ASAM), 355–375 (GLLS…LYLF), 382–402 (ESWI…YYYI), and 426–446 (LLLI…LVLI).

This sequence belongs to the complex I subunit 2 family. NDH-1 is composed of 14 different subunits. Subunits NuoA, H, J, K, L, M, N constitute the membrane sector of the complex.

Its subcellular location is the cell inner membrane. It catalyses the reaction a quinone + NADH + 5 H(+)(in) = a quinol + NAD(+) + 4 H(+)(out). In terms of biological role, NDH-1 shuttles electrons from NADH, via FMN and iron-sulfur (Fe-S) centers, to quinones in the respiratory chain. The immediate electron acceptor for the enzyme in this species is believed to be ubiquinone. Couples the redox reaction to proton translocation (for every two electrons transferred, four hydrogen ions are translocated across the cytoplasmic membrane), and thus conserves the redox energy in a proton gradient. In Rhodopseudomonas palustris (strain BisA53), this protein is NADH-quinone oxidoreductase subunit N.